The primary structure comprises 181 residues: CASP-like protein 1F2 (181 aa).

Residues Met-1–Asn-18 lie on the Cytoplasmic side of the membrane. A helical transmembrane segment spans residues Ile-19–Thr-39. Over Trp-40 to Ser-70 the chain is Extracellular. N-linked (GlcNAc...) asparagine glycosylation is present at Asn-59. A helical membrane pass occupies residues Tyr-71–Gly-91. Residues Arg-92 to Tyr-100 are Cytoplasmic-facing. The helical transmembrane segment at Phe-101–Ala-121 threads the bilayer. At Thr-122–Arg-150 the chain is on the extracellular side. Residues Ala-151–Thr-171 traverse the membrane as a helical segment. The Cytoplasmic portion of the chain corresponds to Ser-172–Val-181.

This sequence belongs to the Casparian strip membrane proteins (CASP) family. As to quaternary structure, homodimer and heterodimers.

Its subcellular location is the cell membrane. This chain is CASP-like protein 1F2, found in Populus trichocarpa (Western balsam poplar).